The chain runs to 371 residues: MKFELIANDGAARRGRLSFPRGTVETPAFMPVGTYGTVKAMTPEELEGIGAEIILGNTFHLMLRPGTEVIQLHGDLHDFMHWEKPILTDSGGFQVFSLADLRKITEEGVKFRSPVDGSEILLTPERSMDVQRALGSDIVMIFDECTPYPATEDQARESMELSLRWAARSKVAHGDSPSALFGIVQGGMYPALRSRSLEGLVDVGFDGYAIGGLSVGEGMEERHHVLDHLMPEMPAERPRYLMGVGKPEDIVEAVRRGVDMFDCVIPTRNARNGFLYTREGVMRIRNSRFRTDTGPIDESCDCYTCRNYSRAYLKHLDKCNEILGARLNTIHNLHYYQTLMRELRGAIAEGRLEAWVAEFYGRRSQAVPSVP.

The Proton acceptor role is filled by Asp89. Residues 89-93 (DSGGF), Asp143, Gln185, and Gly212 contribute to the substrate site. An RNA binding region spans residues 243 to 249 (GVGKPED). Asp262 serves as the catalytic Nucleophile. Residues 267 to 271 (TRNAR) are RNA binding; important for wobble base 34 recognition. Zn(2+)-binding residues include Cys300, Cys302, Cys305, and His331.

This sequence belongs to the queuine tRNA-ribosyltransferase family. As to quaternary structure, homodimer. Within each dimer, one monomer is responsible for RNA recognition and catalysis, while the other monomer binds to the replacement base PreQ1. Zn(2+) serves as cofactor.

The catalysed reaction is 7-aminomethyl-7-carbaguanine + guanosine(34) in tRNA = 7-aminomethyl-7-carbaguanosine(34) in tRNA + guanine. It participates in tRNA modification; tRNA-queuosine biosynthesis. In terms of biological role, catalyzes the base-exchange of a guanine (G) residue with the queuine precursor 7-aminomethyl-7-deazaguanine (PreQ1) at position 34 (anticodon wobble position) in tRNAs with GU(N) anticodons (tRNA-Asp, -Asn, -His and -Tyr). Catalysis occurs through a double-displacement mechanism. The nucleophile active site attacks the C1' of nucleotide 34 to detach the guanine base from the RNA, forming a covalent enzyme-RNA intermediate. The proton acceptor active site deprotonates the incoming PreQ1, allowing a nucleophilic attack on the C1' of the ribose to form the product. After dissociation, two additional enzymatic reactions on the tRNA convert PreQ1 to queuine (Q), resulting in the hypermodified nucleoside queuosine (7-(((4,5-cis-dihydroxy-2-cyclopenten-1-yl)amino)methyl)-7-deazaguanosine). This is Queuine tRNA-ribosyltransferase from Thioalkalivibrio sulfidiphilus (strain HL-EbGR7).